A 410-amino-acid chain; its full sequence is Extracellular serine proteinase (410 aa).

The first 19 residues, 1 to 19 (MKRGGLWLLLGLLVLSACS), serve as a signal peptide directing secretion. A propeptide spanning residues 20–132 (SNPPAASTQE…IEADQEVRAF (113 aa)) is cleaved from the precursor. The Inhibitor I9 domain occupies 45–130 (YIVVYKENAD…AYIEADQEVR (86 aa)). The Peptidase S8 domain maps to 139–410 (TWGLDRIDQR…SPNLLLYTPF (272 aa)). Residues Asp-171, His-204, and Ser-356 each act as charge relay system in the active site.

This sequence belongs to the peptidase S8 family. Post-translationally, contains 4 Cys residues that form two disulfide bonds. Glycosylated. This proteinase has a 0.7% carbohydrate content.

It localises to the secreted. In terms of biological role, serine proteinase with preferred activity for amino acids with aromatic side groups at the P1' side of the scissible bond. This Thermus sp. (strain Rt41A) protein is Extracellular serine proteinase.